The chain runs to 566 residues: Sodium-dependent high-affinity dicarboxylate transporter 3 (566 aa).

12 helical membrane-spanning segments follow: residues 55–75, 92–112, 123–139, 162–182, 219–239, 268–288, 329–349, 352–372, 400–420, 439–459, 496–516, and 521–541; these read LVLV…GPEW, VMPL…VGVL, NDTN…AAAV, WIML…SNTA, MATG…TGTA, WIFF…MTLV, ILLS…GVFF, GAYT…VLPS, ETFP…AAGV, LPLW…TNIC, FAFI…SGMV, and MAFV…LYMN.

This sequence belongs to the SLC13A/DASS transporter (TC 2.A.47) family. NADC subfamily. As to expression, nad-1 and nad-2 are coexpressed in the intestinal tract from early larvae to adults, expression is from the pharynx through to the anus. Expression level is significantly greater in the anterior half of the intestine than in the posterior half.

It is found in the membrane. High-affinity sodium-dicarboxylate cotransporter that accepts a range of tricarboxylic acid-cycle intermediates with 4-5 carbon atoms. There is no interaction with monocarboxylates. Plays a role in the regulation of life span. This chain is Sodium-dependent high-affinity dicarboxylate transporter 3 (nac-3), found in Caenorhabditis elegans.